We begin with the raw amino-acid sequence, 355 residues long: Peptide chain release factor 1 (355 aa).

The residue at position 233 (Q233) is an N5-methylglutamine. Residues 280 to 293 (ERRKKEQERADSRR) show a composition bias toward basic and acidic residues. Positions 280–306 (ERRKKEQERADSRRGQVGSGNRSERIR) are disordered.

Belongs to the prokaryotic/mitochondrial release factor family. Methylated by PrmC. Methylation increases the termination efficiency of RF1.

The protein resides in the cytoplasm. Peptide chain release factor 1 directs the termination of translation in response to the peptide chain termination codons UAG and UAA. The chain is Peptide chain release factor 1 from Rickettsia africae (strain ESF-5).